The following is a 236-amino-acid chain: (5-formylfuran-3-yl)methyl phosphate synthase (236 aa).

The Schiff-base intermediate with substrate role is filled by lysine 27. Lysine 85 (proton acceptor) is an active-site residue.

It belongs to the MfnB family.

The catalysed reaction is 2 D-glyceraldehyde 3-phosphate = 4-(hydroxymethyl)-2-furancarboxaldehyde phosphate + phosphate + 2 H2O. It participates in cofactor biosynthesis; methanofuran biosynthesis. Catalyzes the formation of 4-(hydroxymethyl)-2-furancarboxaldehyde phosphate (4-HFC-P) from two molecules of glyceraldehyde-3-P (GA-3-P). In Methanococcus maripaludis (strain C7 / ATCC BAA-1331), this protein is (5-formylfuran-3-yl)methyl phosphate synthase.